Here is a 132-residue protein sequence, read N- to C-terminus: SH2 domain-containing protein 1B (132 aa).

The SH2 domain maps to 5-101; the sequence is YYHGRLTKQD…GMVVHLLKPI (97 aa). The residue at position 127 (Tyr127) is a Phosphotyrosine.

Binds to the phosphorylated receptors CD84, SLAMF1, LY9 and CD244. Does not bind to non-phosphorylated SLAMF1. Interacts with SLAMF7 (via ITSM phosphorylated on 'Tyr-304'). Interacts with Src kinases HCK, LYN, FYN, FGR and LCK (via kinase domains). Interacts (phosphorylated at Tyr-127) with PLCG1.

Its function is as follows. Cytoplasmic adapter regulating receptors of the signaling lymphocytic activation molecule (SLAM) family such as CD84, SLAMF1, LY9 and CD244. In SLAM signaling seems to cooperate with SH2D1A/SAP. Plays a role in regulation of effector functions of natural killer (NK) cells by controlling signal transduction through CD244/2B4 without effecting its tyrosine phosphorylation; downstream signaling involves PLCG1 and ERK activation. Activation of SLAMF7-mediated NK cell function does not effect receptor tyrosine phosphorylation but distal signaling. In the context of NK cell-mediated cytotoxicity does not enhance conjugate formation with target cells but stimulates polarization of the microtubule-organizing center and cytotoxic granules toward the NK cell synapse. Negatively regulates CD40-induced cytokine production in dendritic cells downstream of SLAM family receptors probably by inducing activation of the PI3K pathway to inhibit p38 MAPK and JNK activation. This is SH2 domain-containing protein 1B (SH2D1B) from Homo sapiens (Human).